The sequence spans 3530 residues: Unconventional myosin-XV (3530 aa).

3 disordered regions span residues 1–46, 615–710, and 730–1057; these read MAKE…RTPK, AGMD…PAHV, and EVPP…QKTL. Over residues 663–681 the composition is skewed to pro residues; the sequence is PPVPPRPPSSGPPPAPPLS. 3 stretches are compositionally biased toward low complexity: residues 682 to 693, 753 to 763, and 823 to 835; these read PALSGLPRPASP, AAFGFPGASPR, and SPAP…RLGP. The span at 836 to 850 shows a compositional bias: pro residues; that stretch reads PGSPLPGSPRPPSPP. Residues 859–869 show a composition bias toward low complexity; the sequence is RSSLNLPSRLP. Residues 903 to 913 are compositionally biased toward basic and acidic residues; that stretch reads PLEHRESPREP. Positions 1027–1038 are enriched in pro residues; the sequence is TKPPTPAPPKDV. Residues 1222 to 1899 enclose the Myosin motor domain; that stretch reads DGVEDMTQLE…LYQLLESMRE (678 aa). 1315–1322 is a binding site for ATP; sequence GESGSGKT. Residues 1323-1350 are a coiled coil; it reads EATKLILRYLAAMNQKREVMQQIKILEA. Positions 1792–1799 are actin-binding; it reads FMRCLKPN. The neck or regulatory domain stretch occupies residues 1888–2029; that stretch reads EHLYQLLESM…AQVPQVAPVR (142 aa). IQ domains lie at 1902-1924, 1925-1954, and 1955-1976; these read LNLA…RFRS, LRHK…SLVK, and FRSL…AEWR. A tail region spans residues 2030 to 3530; it reads TPRLQAEPRV…TLPPSEITLL (1501 aa). Positions 2065–2217 constitute a MyTH4 1 domain; that stretch reads MLTVPLRTPL…PTQLEWTATY (153 aa). Disordered stretches follow at residues 2311 to 2381, 2414 to 2446, 2490 to 2509, and 2644 to 2665; these read AASR…GEPA, YRMK…IPGL, AEKP…GPPA, and TSAP…LEPP. Residues 2349–2371 show a composition bias toward polar residues; that stretch reads GYSSHNQDGTNGETEAQRGTATH. Gly residues predominate over residues 2417–2427; sequence KGGGQPGGGSS. In terms of domain architecture, SH3 spans 2867-2953; the sequence is KDSDYVVAVR…PSELVQPAAA (87 aa). Residues 3050-3204 enclose the MyTH4 2 domain; it reads FTKTPLQESL…PSSIELRAML (155 aa). One can recognise an FERM domain in the interval 3209–3530; that stretch reads SKRQLFLLPG…TLPPSEITLL (322 aa).

It belongs to the TRAFAC class myosin-kinesin ATPase superfamily. Myosin family. As to quaternary structure, interacts with the third PDZ domain of WHRN which is necessary for localization of WHRN to stereocilium tips. Interacts with EPS8. Interacts with FASLG. In terms of tissue distribution, highly expressed in pituitary. Also expressed at lower levels in adult brain, kidney, liver, lung, pancreas, placenta and skeletal muscle. Not expressed in brain. In the pituitary, highly expressed in anterior gland cells.

It is found in the cell projection. The protein localises to the stereocilium. The protein resides in the cytoplasm. Its subcellular location is the cytoskeleton. In terms of biological role, myosins are actin-based motor molecules with ATPase activity. Unconventional myosins serve in intracellular movements. Their highly divergent tails are presumed to bind to membranous compartments, which would be moved relative to actin filaments. Required for the arrangement of stereocilia in mature hair bundles. This Homo sapiens (Human) protein is Unconventional myosin-XV (MYO15A).